Reading from the N-terminus, the 185-residue chain is Elongation factor P (185 aa).

This sequence belongs to the elongation factor P family.

It localises to the cytoplasm. It participates in protein biosynthesis; polypeptide chain elongation. Its function is as follows. Involved in peptide bond synthesis. Stimulates efficient translation and peptide-bond synthesis on native or reconstituted 70S ribosomes in vitro. Probably functions indirectly by altering the affinity of the ribosome for aminoacyl-tRNA, thus increasing their reactivity as acceptors for peptidyl transferase. The sequence is that of Elongation factor P from Streptococcus pyogenes serotype M49 (strain NZ131).